A 417-amino-acid polypeptide reads, in one-letter code: Sterile alpha motif domain-containing protein 14 (417 aa).

Positions leucine 37–histidine 306 are disordered. Positions lysine 40 to serine 49 are enriched in basic residues. 2 positions are modified to phosphoserine: serine 84 and serine 108. The segment covering serine 138–serine 153 has biased composition (low complexity). Over residues proline 159–serine 173 the composition is skewed to basic and acidic residues. Residues serine 173 and serine 179 each carry the phosphoserine modification. Low complexity-rich tracts occupy residues serine 244–serine 260 and serine 276–proline 289. A Phosphoserine modification is found at serine 279. Phosphothreonine is present on threonine 283. Residues tryptophan 326–alanine 389 enclose the SAM domain. Residues aspartate 375–lysine 416 are a coiled coil. The interval alanine 390–serine 417 is disordered.

This Rattus norvegicus (Rat) protein is Sterile alpha motif domain-containing protein 14 (Samd14).